The sequence spans 306 residues: MSTLGHKSDNSLVSNAFGFLRFPLNFMPYDSDAEWVITGIPFDMATSGRAGGRHGPAAIRQVSTNLAWEGNRWPWNFDLRDRVNVVDCGDIVFNFGDAQSMSDNLQAHAEKLLAAGKRMLSFGGDHFVTLPLLRAHAKHFGKMALVHFDAHTDTYANGSQYDHGTMFFHAPNEGLIDPTHSVQIGIRTEYDHDNGFTVLDAAQVNDRSADDLLAQIKQIVGDMPVYLTFDIDCLDPAFAPGTGTPVIGGLTSDRALKLVRGMQSLNIVGMDVVEVAPAYDQSEITALAAATLGLEMLYLQAAKKTK.

H126, D149, H151, D153, D230, and D232 together coordinate Mn(2+).

The protein belongs to the arginase family. Agmatinase subfamily. Requires Mn(2+) as cofactor.

The enzyme catalyses agmatine + H2O = urea + putrescine. Its pathway is amine and polyamine biosynthesis; putrescine biosynthesis via agmatine pathway; putrescine from agmatine: step 1/1. In terms of biological role, catalyzes the formation of putrescine from agmatine. This Serratia proteamaculans (strain 568) protein is Agmatinase.